The sequence spans 345 residues: Holliday junction branch migration complex subunit RuvB (345 aa).

The interval 1–186 (MSTDPDEREV…FGFTAHMDFY (186 aa)) is large ATPase domain (RuvB-L). ATP-binding positions include L25, R26, G67, K70, T71, S72, 133-135 (EDF), R176, Y186, and R223. T71 is a Mg(2+) binding site. Residues 187–257 (EPAELERVLV…VAKAALAVYD (71 aa)) are small ATPAse domain (RuvB-S). The interval 260-345 (ELGLDRLDRA…AGANQPGLFE (86 aa)) is head domain (RuvB-H). R315 and R320 together coordinate DNA.

It belongs to the RuvB family. In terms of assembly, homohexamer. Forms an RuvA(8)-RuvB(12)-Holliday junction (HJ) complex. HJ DNA is sandwiched between 2 RuvA tetramers; dsDNA enters through RuvA and exits via RuvB. An RuvB hexamer assembles on each DNA strand where it exits the tetramer. Each RuvB hexamer is contacted by two RuvA subunits (via domain III) on 2 adjacent RuvB subunits; this complex drives branch migration. In the full resolvosome a probable DNA-RuvA(4)-RuvB(12)-RuvC(2) complex forms which resolves the HJ.

It is found in the cytoplasm. It catalyses the reaction ATP + H2O = ADP + phosphate + H(+). The RuvA-RuvB-RuvC complex processes Holliday junction (HJ) DNA during genetic recombination and DNA repair, while the RuvA-RuvB complex plays an important role in the rescue of blocked DNA replication forks via replication fork reversal (RFR). RuvA specifically binds to HJ cruciform DNA, conferring on it an open structure. The RuvB hexamer acts as an ATP-dependent pump, pulling dsDNA into and through the RuvAB complex. RuvB forms 2 homohexamers on either side of HJ DNA bound by 1 or 2 RuvA tetramers; 4 subunits per hexamer contact DNA at a time. Coordinated motions by a converter formed by DNA-disengaged RuvB subunits stimulates ATP hydrolysis and nucleotide exchange. Immobilization of the converter enables RuvB to convert the ATP-contained energy into a lever motion, pulling 2 nucleotides of DNA out of the RuvA tetramer per ATP hydrolyzed, thus driving DNA branch migration. The RuvB motors rotate together with the DNA substrate, which together with the progressing nucleotide cycle form the mechanistic basis for DNA recombination by continuous HJ branch migration. Branch migration allows RuvC to scan DNA until it finds its consensus sequence, where it cleaves and resolves cruciform DNA. The protein is Holliday junction branch migration complex subunit RuvB of Mycobacterium ulcerans (strain Agy99).